The following is a 575-amino-acid chain: Jasmonoyl--L-amino acid synthetase JAR1 (575 aa).

Residues 10–30 (MNRVIDEFDEMTRNAHQVQKQ) are a coiled coil. Ser-98 serves as a coordination point for ATP. Ser-101 is a jasmonate binding site. Residues Met-118, Thr-121, Gly-163, Asn-168, and 331-336 (GSSEGW) contribute to the ATP site. 166–170 (TTNVY) is a binding site for an L-alpha-amino acid. 328 to 331 (HDYG) serves as a coordination point for jasmonate. 530-534 (KIQEH) is a binding site for an L-alpha-amino acid. Lys-557 contributes to the ATP binding site.

The protein belongs to the IAA-amido conjugating enzyme family. As to quaternary structure, interacts with GSTU20/FIP1 under continuous far red (cFR) light; this binding increases its activity and determines the priority of substrate binding.

The protein resides in the cytoplasm. It catalyses the reaction a jasmonate + an L-alpha-amino acid + ATP = a jasmonyl-L-amino acid + AMP + diphosphate + H(+). It carries out the reaction (+)-7-isojasmonate + L-isoleucine + ATP = L-isoleucine-(+)-7-isojasmonate + AMP + diphosphate + H(+). Activated by GSTU20/FIP1. Catalyzes the synthesis of jasmonates-amino acid conjugates by adenylation; can use Ile and, in vitro at least, Val, Leu and Phe as conjugating amino acids on jasmonic acid (JA) and 9,10-dihydro-JA substrates, and to a lower extent, on 3-oxo-2-(2Z-pentenyl)-cyclopentane-1-butyric acid (OPC-4) and 12-hydroxy-JA (12-OH-JA). Can synthesize adenosine 5-tetraphosphate in vitro. Required for the JA-mediated signaling pathway that regulates many developmental and defense mechanisms, including growth root inhibition, vegetative storage proteins (VSPs) accumulation, induced systemic resistance (ISR), response to wounding and herbivores, tolerance to ozone O(3) (probably having a role in lesion containment). Plays an important role in the accumulation of JA-Ile in response to wounding, both locally and systemically; promotes JA responding genes especially in distal part of wounded plants, via the JA-Ile-stimulated degradation of JAZ repressor proteins by the SCF(COI)E3 ubiquitin-protein ligase pathway. Involved in the apoptosis-like programmed cell death (PCD) induced by fungal toxin fumonisin B1-mediated (FB1). Required for volatile compounds (C6-aldehydes and allo-ocimene)-mediated defense activation. Involved in the non-pathogenic rhizobacterium-mediated ISR (defense priming) by P.fluorescens (strains CHAOr and WCS417r) and P.putida LSW17S against infection leaf pathogens such as P.syringae pv. tomato and H.parasitica. Required for the JA-dependent resistance to fungi such as P.irregulare, U.vignae and U.appendiculatus. Necessary to induce systemic resistance against R.solanaceraum and P.syringae pv. tomato with P.oligandrum (a non-pathogenic biocontrol agent) cell wall protein fraction (CWP). Mediates PGIP2 accumulation in response to B.cinerea infection and thus contributes to resistance against this pathogen. Modulates the UV-B alteration of leaves attractiveness to diamondback moths P.xylostella leading to insect oviposition. Involved in the regulation of far-red light influence on development, being an actor of the interplay between light and JA signaling. Seems necessary for the salicylic acid (SA)-mediated, NPR1-independent resistance pathway. May contribute to the chitin-elicited pathway. Contributes to the sensitivity toward F.graminearum. In Arabidopsis thaliana (Mouse-ear cress), this protein is Jasmonoyl--L-amino acid synthetase JAR1.